The primary structure comprises 206 residues: GCN5-like protein acetyltransferase Rv2170 (206 aa).

An N-acetyltransferase domain is found at Glu44–Pro205. Tyr176 serves as the catalytic Proton donor.

It belongs to the acetyltransferase family.

It catalyses the reaction L-lysyl-[protein] + acetyl-CoA = N(6)-acetyl-L-lysyl-[protein] + CoA + H(+). The enzyme catalyses propanoyl-CoA + L-lysyl-[protein] = N(6)-propanoyl-L-lysyl-[protein] + CoA + H(+). It carries out the reaction succinyl-CoA + L-lysyl-[protein] = N(6)-succinyl-L-lysyl-[protein] + CoA + H(+). Its function is as follows. Acetyltransferase involved in the post-translational regulation of the central metabolic enzyme isocitrate dehydrogenase 1 (ICDH-1) through lysine acetylation. Catalyzes the acetylation of ICDH-1 at Lys-30 and Lys-129, using acetyl-CoA as a donor, leading to a reduction of ICDH-1 enzyme activity. Can also use propionyl-CoA and succinyl-CoA as donors. Cannot act on the isocitrate dehydrogenase 2 (ICDH-2). Might play a role in regulating the TCA cycle and methylcitrate cycle when M.tuberculosis utilizes fatty acid as carbon source. Functionally, in addition, it can acetylate the amino group of isoniazid (INH), one of the first-line drugs used for the treatment of tuberculosis, thereby canceling out the drug toxicity. Acts by catalyzing the transfer of an acetyl group from acetyl-CoA to INH. Following acetylation, INH is broken down into isonicotinic acid and acetylhydrazine. M.smegmatis and M.tuberculosis H37Ra strains overexpressing Rv2170 are resistant to INH. Has little or no acetyltransferase activity with other antibiotics such as streptomycin, neomycin, kanamycin, amikacin, apramycin and gentamicin. The sequence is that of GCN5-like protein acetyltransferase Rv2170 from Mycobacterium tuberculosis (strain ATCC 25618 / H37Rv).